The following is a 203-amino-acid chain: Nascent polypeptide-associated complex subunit alpha (203 aa).

The span at M1–V19 shows a compositional bias: basic and acidic residues. Residues M1–H45 form a disordered region. Residues D21–E32 show a composition bias toward acidic residues. Residues S46–A111 enclose the NAC-A/B domain. A disordered region spans residues Q118–K167. Positions A125–E150 are enriched in basic and acidic residues. A compositionally biased stretch (acidic residues) spans E151–G163. The UBA domain occupies L164–I203.

It belongs to the NAC-alpha family. Part of the nascent polypeptide-associated complex (NAC), consisting of egd2 and egd1. NAC associates with ribosomes via egd1.

The protein resides in the cytoplasm. It localises to the nucleus. In terms of biological role, component of the nascent polypeptide-associated complex (NAC), a dynamic component of the ribosomal exit tunnel, protecting the emerging polypeptides from interaction with other cytoplasmic proteins to ensure appropriate nascent protein targeting. The NAC complex also promotes mitochondrial protein import by enhancing productive ribosome interactions with the outer mitochondrial membrane and blocks the inappropriate interaction of ribosomes translating non-secretory nascent polypeptides with translocation sites in the membrane of the endoplasmic reticulum. Egd2 may also be involved in transcription regulation. The polypeptide is Nascent polypeptide-associated complex subunit alpha (egd2) (Emericella nidulans (strain FGSC A4 / ATCC 38163 / CBS 112.46 / NRRL 194 / M139) (Aspergillus nidulans)).